We begin with the raw amino-acid sequence, 135 residues long: HTH-type transcriptional regulator DicA (135 aa).

One can recognise an HTH cro/C1-type domain in the interval 12-66; that stretch reads IRYRRKNLKHTQRSLAKALKISHVSVSQWERGDSEPTGKNLFALSKVLQCSPTWI. A DNA-binding region (H-T-H motif) is located at residues 23–42; the sequence is QRSLAKALKISHVSVSQWER.

This protein is a repressor of division inhibition gene dicB. The chain is HTH-type transcriptional regulator DicA (dicA) from Escherichia coli (strain K12).